A 1310-amino-acid polypeptide reads, in one-letter code: Cadherin-related family member 2 (1310 aa).

Residues 1-20 form the signal peptide; sequence MAQLWLSCFLLPALVVSVAA. Residues 21 to 1154 lie on the Extracellular side of the membrane; the sequence is NVAPKFLANM…ESDLSKQLIS (1134 aa). Cadherin domains lie at 27–124, 125–241, and 242–353; these read LANM…APVF, QNTA…DPQF, and VREF…KPEF. N-linked (GlcNAc...) asparagine glycosylation is found at Asn-29, Asn-134, Asn-182, Asn-188, Asn-195, Asn-300, Asn-355, Asn-371, Asn-401, Asn-460, Asn-565, Asn-600, Asn-616, Asn-632, Asn-680, Asn-696, Asn-701, Asn-775, Asn-821, Asn-871, Asn-877, Asn-911, Asn-932, and Asn-1107. 6 Cadherin domains span residues 368 to 480, 481 to 586, 586 to 695, 696 to 808, 810 to 928, and 930 to 1058; these read AQVN…RPTF, PQSL…APVV, VSGS…LPIF, NQSS…PPTL, VASL…APYF, and PENK…TPKE. The chain crosses the membrane as a helical span at residues 1155–1175; the sequence is VIIGLGVALLLVLVIMTMAFV. Over 1176 to 1310 the chain is Cytoplasmic; it reads CVRKSYNRKL…TNAGLDTTDL (135 aa). Residues 1180 to 1310 are mediates interaction with USH1C and MYO7B and is required for proper localization to microvilli tips and function in microvilli organization; that stretch reads SYNRKLQAMK…TNAGLDTTDL (131 aa). Ser-1248 is subject to Phosphoserine. The segment covering 1259-1268 has biased composition (basic and acidic residues); it reads NSQEIKEHRP. The interval 1259-1310 is disordered; that stretch reads NSQEIKEHRPPHTPPEPDPEPLSVVLLGRQAGASGQLEGPSYTNAGLDTTDL. Ser-1299 carries the post-translational modification Phosphoserine. Residues 1299 to 1310 show a composition bias toward polar residues; the sequence is SYTNAGLDTTDL.

In terms of assembly, part of the IMAC/intermicrovillar adhesion complex/intermicrovillar tip-link complex composed of ANKS4B, MYO7B, USH1C, CDHR2 and CDHR5. Interacts with MAST2. Interacts (via cytoplasmic domain) with USH1C and MYO7B; required for proper localization of CDHR2 to microvilli tips and its function in brush border differentiation. Highly expressed in liver, kidney and colon. Moderately expressed in small intestine. Down-regulated in a number of liver and colon cancers. Expressed in duodenum with higher expression in enterocytes along the villus axis and lower expression in crypts (at protein level).

It localises to the apical cell membrane. It is found in the cell projection. The protein resides in the microvillus membrane. Its subcellular location is the cell junction. Functionally, intermicrovillar adhesion molecule that forms, via its extracellular domain, calcium-dependent heterophilic complexes with CDHR5 on adjacent microvilli. Thereby, controls the packing of microvilli at the apical membrane of epithelial cells. Through its cytoplasmic domain, interacts with microvillus cytoplasmic proteins to form the intermicrovillar adhesion complex/IMAC. This complex plays a central role in microvilli and epithelial brush border differentiation. May also play a role in cell-cell adhesion and contact inhibition in epithelial cells. In Homo sapiens (Human), this protein is Cadherin-related family member 2.